We begin with the raw amino-acid sequence, 198 residues long: Thymidylate kinase (198 aa).

An ATP-binding site is contributed by 10-17 (GLDGSGKT).

This sequence belongs to the thymidylate kinase family.

The enzyme catalyses dTMP + ATP = dTDP + ADP. Its function is as follows. Phosphorylation of dTMP to form dTDP in both de novo and salvage pathways of dTTP synthesis. This is Thymidylate kinase from Thermus thermophilus (strain ATCC BAA-163 / DSM 7039 / HB27).